A 564-amino-acid chain; its full sequence is Probable diguanylate cyclase DgcQ (564 aa).

2 helical membrane passes run 20–40 (LGPG…STLL) and 360–380 (IALT…WYVI). In terms of domain architecture, GGDEF spans 428–563 (HPFSVIQVDL…GRNRVFASDN (136 aa)). Mg(2+) is bound at residue D436. Residues N444, H449, and D453 each coordinate substrate. E479 provides a ligand contact to Mg(2+). The active-site Proton acceptor is E479.

As to quaternary structure, homodimer. The cofactor is Mg(2+).

The protein resides in the cell inner membrane. It carries out the reaction 2 GTP = 3',3'-c-di-GMP + 2 diphosphate. The protein operates within glycan metabolism; bacterial cellulose biosynthesis. Its pathway is purine metabolism; 3',5'-cyclic di-GMP biosynthesis. In terms of biological role, catalyzes the synthesis of cyclic-di-GMP (c-di-GMP) via the condensation of 2 GTP molecules. Cyclic-di-GMP is a second messenger which controls cell surface-associated traits in bacteria. Involved in the regulation of cellulose production. The polypeptide is Probable diguanylate cyclase DgcQ (Escherichia coli (strain K12)).